Here is a 338-residue protein sequence, read N- to C-terminus: Glycerol-3-phosphate dehydrogenase [NAD(P)+] (338 aa).

Ser-15, Tyr-16, His-36, and Lys-110 together coordinate NADPH. 3 residues coordinate sn-glycerol 3-phosphate: Lys-110, Gly-139, and Thr-141. Ala-143 provides a ligand contact to NADPH. Sn-glycerol 3-phosphate-binding residues include Lys-195, Asp-248, Ser-258, Arg-259, and Asn-260. Lys-195 functions as the Proton acceptor in the catalytic mechanism. Arg-259 contributes to the NADPH binding site. Residues Val-283 and Glu-285 each contribute to the NADPH site.

It belongs to the NAD-dependent glycerol-3-phosphate dehydrogenase family.

The protein localises to the cytoplasm. The catalysed reaction is sn-glycerol 3-phosphate + NAD(+) = dihydroxyacetone phosphate + NADH + H(+). It catalyses the reaction sn-glycerol 3-phosphate + NADP(+) = dihydroxyacetone phosphate + NADPH + H(+). The protein operates within membrane lipid metabolism; glycerophospholipid metabolism. In terms of biological role, catalyzes the reduction of the glycolytic intermediate dihydroxyacetone phosphate (DHAP) to sn-glycerol 3-phosphate (G3P), the key precursor for phospholipid synthesis. The chain is Glycerol-3-phosphate dehydrogenase [NAD(P)+] from Edwardsiella ictaluri (strain 93-146).